The following is a 198-amino-acid chain: Calcium channel flower (198 aa).

The next 3 membrane-spanning stretches (helical) occupy residues 36–56 (LGIV…LSII), 67–89 (IIQM…VCIE), and 114–134 (AVPP…GLIF).

Belongs to the calcium channel flower family. As to quaternary structure, homomultimer. Associates with the dally/ magu complex.

It is found in the cell membrane. Its subcellular location is the cytoplasmic vesicle. The protein resides in the secretory vesicle. The protein localises to the synaptic vesicle membrane. It localises to the presynaptic cell membrane. It is found in the endosome. Its activity is regulated as follows. Channel activity is inhibited by La(3+), which reduces Ca(2+) influx and thus inhibits it's function in promoting activity-dependent bulk endocytosis (ADBE) in response to high stimuli. Transmembrane protein which mediates synaptic endocytosis, fitness-based cell culling, neuronal culling, morphogen gradient scaling, and calcium transport. Regulates synaptic endocytosis and hence couples exo- with endocytosis. Controls two major modes of synaptic vesicle (SV) endocytosis in the synaptic boutons of neuromuscular junctions (NMJs); Ca(2+) channel-independent Clathrin-mediated endocytosis (CME) in response to mild stimulation, and Ca(2+) channel-dependent activity-dependent bulk endocytosis (ADBE) in response to strong stimulation. Functions in ADBE and subsequent SV reformation from bulk endosomes by initiating Ca(2+) channel-dependent phosphatidylinositol 4,5-bisphosphate (PtdIns(4,5)P2) compartmentalization in synaptic boutons. There it acts at the periactive zone to provide the low Ca(2+) levels required to initiate Calcineurin activation and upregulate PtdIns(4,5)P2. Conversely PtdIns(4,5)P2 enhances fwe Ca(2+) channel-activity, establishing a positive feedback loop that induces PtdIns(4,5)P2 microdomain at the periactive zone. These microdomains trigger bulk membrane invagination (i.e. ADBE) by triggering actin polymerization while also promoting localization of fwe to bulk endosomes, thereby removing the ADBE trigger to reduce endocytosis and prevent excess membrane uptake. PtdIns(4,5)P2 then promotes SV reformation from the bulk endosomes, to coordinate ADBE and subsequent SV reformation. Different combinations of the flower isoforms at the cell membrane are also required for the identification and elimination of suboptimal or supernumerary cells during development, regeneration, and adulthood. Required for the recognition and elimination of unfit cells in the developing wing during cell competition. In the developing pupal retina, mediates the elimination of unwanted postmitotic neurons, including supernumerary photoreceptor neurons that form at the periphery of the retina and are contained within incomplete ommatidia units. Also required for efficient elimination and replacement of old neurons by newly generated neurons during regeneration in the adult brain following mechanical injury. Downstream of the flower fitness fingerprints, cells identified as unwanted or unfit are eliminated via apoptosis through the expression of ahuizotl (azot). However, the cells marked for elimination by the flower isoforms only undergo apoptosis if additional thresholds are met; (1) their neighboring fit/healthy cells express different levels of the fwe isoforms, and (2) the levels of the protective signal SPARC expressed by the loser or unwanted cells are unable to inhibit caspase activation. These additional thresholds for flower-mediated apoptosis, allows useful cells to recover from transient and limited stress before they are unnecessarily eliminated. Functions with dally and magu in a mechanism of scaling, which utilises apoptosis to ensure that the dpp morphogen gradient, which mediates organ growth, remains proportional to the size of the growing wing. In this mechanism, fwe represses dally- and Magu-dependent activity in expanding the gradient, and dally/Magu inhibits fwe-dependent apoptosis to keep cell death rate low. When the levels of these different proteins are optimally regulated the gradient correctly scales with organ growth but when this fails, fwe-mediated apoptosis is activated to trim the developing tissue to match the correct size of the gradient. This Drosophila persimilis (Fruit fly) protein is Calcium channel flower.